We begin with the raw amino-acid sequence, 324 residues long: T-cell acute lymphocytic leukemia protein 1 homolog (324 aa).

A disordered region spans residues 1–49; the sequence is MMEKLKSEQFPLSPSAEGCASPPRGDGDARGKQEGTTAETGEHRLPEEL. One can recognise a bHLH domain in the interval 185 to 237; that stretch reads VRRIFTNSRERWRQQNVNGAFAELRKLIPTHPPDKKLSKNEILRLAMKYINFL. The disordered stretch occupies residues 276 to 324; the sequence is SPNSSCGSLLDGDASPESFTEDQDSSVESRPSARGLHHSSLPLDGNAQR.

In terms of tissue distribution, expressed in hemopoietic and endothelial lineages. Isoform beta emerges first, expressing in the entire anterior and posterior lateral mesoderm (ALM and PLM respectively), and in the ventral wall of the dorsal aorta, where definitive hemopoiesis begins. Isoform alpha expresses later as two pairs of stripes in the PLM and ALM, and becomes restricted to the intermediate cell mass (ICM) by the 18-somite stage. The ICM is the key site of primitive hemopoiesis, giving rise to the erythroid lineage. Also expressed in all stages of endocardial cell migration and in the developing midbrain, hindbrain and spinal cord. In adults, expressed in the main hemopoietic organs, namely the kidney (where isoform alpha is the predominant isoform) and the spleen. Also expressed in the liver, gill and gonads.

Its subcellular location is the nucleus. In terms of biological role, transcription factor that plays a pivotal role in hemopoietic and endothelial development, acting synergistically with lmo2 and downstream of clo. Specifies mesodermal precursors to a hemangioblast cell fate. Hemangioblasts are bipotential precursors of blood and endothelium, and in the absence of hemopoietic induction cues such as gata1, tal1/scl-lmo2-induced hemangioblasts differentiate into endothelial cells. Isoform alpha and isoform beta are redundant for the initiation of primitive hemopoiesis but have distinct roles in the regulation of primitive erythroid differentiation and definitive hemopoietic stem cell specification, most likely due to differences in expression levels. Specification of definitive hemopoietic stem cells requires isoform beta. DNA binding is required for erythroid maturation, but not for its other hemopoietic functions. Endothelial roles include development of the dorsal aorta, the site of definitive hemopoiesis in the embryo. Required for angiogenesis but not angioblast specification. Has an additional role in endocardium formation during heart development. May play a role in central nervous system development. The polypeptide is T-cell acute lymphocytic leukemia protein 1 homolog (Danio rerio (Zebrafish)).